The chain runs to 374 residues: Serpin B8 (374 aa).

This sequence belongs to the serpin family. Ov-serpin subfamily.

The protein localises to the cytoplasm. Functionally, has an important role in epithelial desmosome-mediated cell-cell adhesion. This is Serpin B8 (SERPINB8) from Homo sapiens (Human).